Here is a 319-residue protein sequence, read N- to C-terminus: High mobility group B protein 10 (319 aa).

Over residues 1–13 the composition is skewed to polar residues; that stretch reads MSTDISPPYSQTH. The tract at residues 1-25 is disordered; it reads MSTDISPPYSQTHVEPVNGYPSDNK. An ARID domain is found at 40-131; sequence VRNSALFWEK…FLFQLEHVYY (92 aa). Residues 203–220 show a composition bias toward polar residues; that stretch reads PSQSQQTMETPSAIVQSS. A disordered region spans residues 203 to 230; the sequence is PSQSQQTMETPSAIVQSSQRRHRKKSKL. Positions 238 to 305 form a DNA-binding region, HMG box; sequence PKCHRSGYNF…RYRIEMLEYK (68 aa).

In terms of tissue distribution, ubiquitously expressed.

It is found in the nucleus. Its function is as follows. Binds preferentially DNA with A/T-rich content. The chain is High mobility group B protein 10 (HMGB10) from Arabidopsis thaliana (Mouse-ear cress).